Consider the following 530-residue polypeptide: MIAWTRFRERPWSGPALALIAGLAAALAHPPFGVLPGLLGYAGLLHLLDNADVQRPLRSVFWRGWLAGVGYFGLGTWWVGEAFLVDAATHGWMAPFAVTGMAAGLALFWGLAALLYRALRPASAWRVLTFAGAFAALEWMRGHVLTGFPWNLPGETWKAGSAPSQLAALVGAYGLTWITLAIAGAPAVWRQGRGGRAATGLAVASLIGLYGYGAIALSRPLSPSGPTTVRIVQADIKQDLKWDAERFAQIVQAYVSLTATPYAAKPADIVIWPEGALPAAVNDYLAPGTWVRQAIVDSLAPGQLLLIGGYRYEGAGPHPTYYNSLVALRRTETDLELVGIYDKHRLVPFGEYLPADRFLTVIGFKSLARLSDNFTTGPTPAPLRISPELLVQPLICYESLFPGLAKPDPNVRALINVSNDAWFGVTSGPPQHLNLASYRAIESAKPILRATPTGISAVVDARGRIVPGASLGLGESGVIDAQIPGMGQVTPYDNFGDVAFLALILISGVVSARVRIGKISSSIAPKRKLS.

6 consecutive transmembrane segments (helical) span residues 19-39 (LIAG…PGLL), 65-85 (WLAG…AFLV), 96-116 (FAVT…ALLY), 128-148 (LTFA…LTGF), 169-189 (LVGA…PAVW), and 197-217 (AATG…AIAL). Residues 232–485 (VQADIKQDLK…SGVIDAQIPG (254 aa)) form the CN hydrolase domain. Residue Glu-274 is the Proton acceptor of the active site. Lys-343 is an active-site residue. Cys-396 (nucleophile) is an active-site residue.

Belongs to the CN hydrolase family. Apolipoprotein N-acyltransferase subfamily.

It localises to the cell inner membrane. It catalyses the reaction N-terminal S-1,2-diacyl-sn-glyceryl-L-cysteinyl-[lipoprotein] + a glycerophospholipid = N-acyl-S-1,2-diacyl-sn-glyceryl-L-cysteinyl-[lipoprotein] + a 2-acyl-sn-glycero-3-phospholipid + H(+). It participates in protein modification; lipoprotein biosynthesis (N-acyl transfer). Catalyzes the phospholipid dependent N-acylation of the N-terminal cysteine of apolipoprotein, the last step in lipoprotein maturation. The sequence is that of Apolipoprotein N-acyltransferase from Caulobacter vibrioides (strain ATCC 19089 / CIP 103742 / CB 15) (Caulobacter crescentus).